A 178-amino-acid polypeptide reads, in one-letter code: Large ribosomal subunit protein bL25 (178 aa).

Belongs to the bacterial ribosomal protein bL25 family. CTC subfamily. In terms of assembly, part of the 50S ribosomal subunit; part of the 5S rRNA/L5/L18/L25 subcomplex. Contacts the 5S rRNA. Binds to the 5S rRNA independently of L5 and L18.

In terms of biological role, this is one of the proteins that binds to the 5S RNA in the ribosome where it forms part of the central protuberance. This is Large ribosomal subunit protein bL25 from Helicobacter pylori (strain ATCC 700392 / 26695) (Campylobacter pylori).